The chain runs to 482 residues: uncharacterized protein (482 aa).

12 helical membrane-spanning segments follow: residues 40 to 57 (LDWYLMPMFSVLYFLSFL), 83 to 103 (AAVSVFYATYITAETPSVLLV), 109 to 129 (HYYLSAMIIGWSLVTIFTCFV), 140 to 160 (LLLGICEGGFFPCLSLYISMT), 170 to 190 (LAYLYVCSCFSGAFGGLIATG), 205 to 225 (WLYIIEGLISAISALWILFCL), 278 to 298 (VIQFCQDLVLYGISTFLPSIL), 311 to 331 (YMSVPVYALGGISVYVICLLS), 338 to 358 (GWFIIGMNFFGLAGFIILLAT), 366 to 386 (VATYLIALPLYPTVALNITWI), 399 to 418 (ALGCNQTIGNLAGVIAGQVY), and 428 to 448 (GFALGCTVVGTLTATAMRFYL).

Belongs to the major facilitator superfamily. Allantoate permease family.

The protein localises to the endoplasmic reticulum. Its subcellular location is the membrane. This is an uncharacterized protein from Schizosaccharomyces pombe (strain 972 / ATCC 24843) (Fission yeast).